The chain runs to 38 residues: MTPSLANFLWSLLYGAVVLGLLFGAIVFVSQRDRVRRR.

The chain crosses the membrane as a helical span at residues Phe-8–Phe-28.

Belongs to the PsbX family. Type 1 subfamily. As to quaternary structure, PSII is composed of 1 copy each of membrane proteins PsbA, PsbB, PsbC, PsbD, PsbE, PsbF, PsbH, PsbI, PsbJ, PsbK, PsbL, PsbM, PsbT, PsbX, PsbY, PsbZ, Psb30/Ycf12, peripheral proteins PsbO, CyanoQ (PsbQ), PsbU, PsbV and a large number of cofactors. It forms dimeric complexes.

The protein localises to the cellular thylakoid membrane. Its function is as follows. Involved in the binding and/or turnover of quinones at the Q(B) site of photosystem II (PSII). PSII is a light-driven water plastoquinone oxidoreductase, using light energy to abstract electrons from H(2)O, generating a proton gradient subsequently used for ATP formation. The polypeptide is Photosystem II reaction center protein X 1 (Synechococcus sp. (strain JA-3-3Ab) (Cyanobacteria bacterium Yellowstone A-Prime)).